Consider the following 1168-residue polypeptide: Homeodomain-interacting protein kinase 2 (1168 aa).

Serine 16 carries the post-translational modification Phosphoserine. Lysine 32 participates in a covalent cross-link: Glycyl lysine isopeptide (Lys-Gly) (interchain with G-Cter in SUMO); alternate. Lysine 32 is covalently cross-linked (Glycyl lysine isopeptide (Lys-Gly) (interchain with G-Cter in SUMO2); alternate). Residues 97–230 (SASSTSVTGQ…TNEIVAIKIL (134 aa)) form a transcriptional corepression region. Phosphoserine is present on residues serine 118 and serine 135. Threonine 141 carries the post-translational modification Phosphothreonine. The tract at residues 189–520 (HEVLCSMTNT…DADKRITPIE (332 aa)) is interaction with DAXX. The 329-residue stretch at 199–527 (YEVLEFLGRG…PIETLNHPFV (329 aa)) folds into the Protein kinase domain. Residues 205–213 (LGRGTFGQV) and lysine 228 contribute to the ATP site. Phosphothreonine is present on residues threonine 252 and threonine 273. Residue aspartate 324 is the Proton acceptor of the active site. Tyrosine 361 is modified (phosphotyrosine). Serine 441 carries the post-translational modification Phosphoserine. Phosphothreonine occurs at positions 482, 517, and 566. The interval 539 to 816 (THVKSCFQNM…KENTPPRCAM (278 aa)) is interaction with SKI and SMAD1. An interaction with DAZAP2 region spans residues 595–772 (PSAASMAAVA…MRQQPTSTTS (178 aa)). Serine 607 and serine 641 each carry phosphoserine. Residue threonine 660 is modified to Phosphothreonine. Residues 724–869 (RNTHAHGSHY…ITISSDTDEE (146 aa)) form an interaction with POU4F1 region. The interval 746 to 848 (HVTLPAAQPL…TRERQRQTIV (103 aa)) is interaction with CTBP1. The interval 759 to 869 (VAHVMRQQPT…ITISSDTDEE (111 aa)) is interaction with HMGA1. Positions 764–820 (RQQPTSTTSSRKSKQHQPSMRNVSTCEVTSSQSTSSPQRSKRVKENTPPRCAMVHSS) are disordered. The segment covering 765 to 791 (QQPTSTTSSRKSKQHQPSMRNVSTCEV) has biased composition (polar residues). The short motif at 774 to 777 (RKSK) is the Nuclear localization signal 1 (NLS1) element. 2 positions are modified to phosphoserine: serine 787 and serine 799. A compositionally biased stretch (low complexity) spans 792–801 (TSSQSTSSPQ). The Nuclear localization signal 2 (NLS2) motif lies at 804–807 (KRVK). Residues 812–907 (PRCAMVHSSP…YSDSSSNTSP (96 aa)) are interaction with TP53 and TP73. Positions 845–879 (QTIVIPDTPSPTVSVITISSDTDEEEEQKHAPTST) are interaction with UBE2I. The segment at 845–952 (QTIVIPDTPS…PLKTQASEVL (108 aa)) is localization to nuclear speckles. The interval 845 to 952 (QTIVIPDTPS…PLKTQASEVL (108 aa)) is required for localization to nuclear speckles. An interaction with UBL1 region spans residues 854–876 (SPTVSVITISSDTDEEEEQKHAP). The SUMO interaction motifs (SIM); required for nuclear localization and kinase activity stretch occupies residues 856–880 (TVSVITISSDTDEEEEQKHAPTSTV). The tract at residues 894–936 (HDSPYSDSSSNTSPYSVQQRTGHNGTNTLDTKGALENHCTGNP) is disordered. Residues 895-909 (DSPYSDSSSNTSPYS) are compositionally biased toward low complexity. At serine 906 the chain carries Phosphoserine. Residues 907-1022 (PYSVQQRTGH…LSQAQPHMAT (116 aa)) are interaction with AXIN1. A compositionally biased stretch (polar residues) spans 910 to 923 (VQQRTGHNGTNTLD). Glycyl lysine isopeptide (Lys-Gly) (interchain with G-Cter in SUMO2) cross-links involve residues lysine 925 and lysine 945. The autoinhibitory domain (AID) stretch occupies residues 956–1168 (DSLGPAVSTG…PAKVNQYPYI (213 aa)). The interval 960-1030 (PAVSTGHHSS…ATDRTGSHRR (71 aa)) is disordered. Residue serine 963 is modified to Phosphoserine. Composition is skewed to low complexity over residues 965–991 (GHHS…GSSS) and 998–1018 (QQRP…QAQP). A phosphoserine mark is found at serine 1014, serine 1125, and serine 1158. Lysine 1161 participates in a covalent cross-link: Glycyl lysine isopeptide (Lys-Gly) (interchain with G-Cter in SUMO).

Belongs to the protein kinase superfamily. CMGC Ser/Thr protein kinase family. HIPK subfamily. As to quaternary structure, interacts with CREB1, SIAH1, WSB1, CBX4, TRADD, p53/TP53, TP73, TP63, CREBBP, DAXX, P53DINP1, SKI, SMAD1, SMAD2 and SMAD3, but not SMAD4. Interacts with ATF1, PML, RUNX1, EP300, NKX1-2, NKX2-5, UBE2I, HMGA1, CTBP1, AXIN1, NLK, MYB, POU4F1, POU4F2, POU4F3, UBE2I, UBL1 and ZBTB4. Probably part of a complex consisting of p53/TP53, HIPK2 and AXIN1. Interacts with SP100; positively regulates TP53-dependent transcription. Interacts with DAZAP2; the interaction results in phosphorylation of DAZAP2 which causes localization of DAZAP2 to the nucleus, reduces interaction of DAZAP2 with HIPK2 and prevents DAZAP2-dependent degradation of HIPK2. Interacts with SIAH1; the interaction is promoted by DAZAP2 and results in SIAH1-mediated ubiquitination and subsequent proteasomal degradation of HIPK2. Post-translationally, autophosphorylation at Tyr-361 in the activation loop activates the kinase and promotes nuclear localization. In terms of processing, sumoylated. When conjugated it is directed to nuclear speckles. Desumoylated by SENP1. Sumoylation on Lys-32 is promoted by the E3 SUMO-protein ligase CBX4. Ubiquitinated by FBXO3, WSB1 and SIAH1, leading to rapid proteasome-dependent degradation. The degradation mediated by FBXO3, but not ubiquitination, is prevented in the presence of PML. The degradation mediated by WSB1 and SIAH1 is reversibly reduced upon DNA damage. Post-translationally, cleaved at Asp-895 and Asp-956 by CASP6 in a p53/TP53-dependent manner. The cleaved form lacks the autoinhibitory C-terminal domain (AID), resulting in a hyperactive kinase, which potentiates p53/TP53 Ser-46 phosphorylation and subsequent activation of the cell death machinery.

It localises to the nucleus. It is found in the PML body. The protein resides in the cytoplasm. It catalyses the reaction L-seryl-[protein] + ATP = O-phospho-L-seryl-[protein] + ADP + H(+). The enzyme catalyses L-threonyl-[protein] + ATP = O-phospho-L-threonyl-[protein] + ADP + H(+). Serine/threonine-protein kinase involved in transcription regulation, p53/TP53-mediated cellular apoptosis and regulation of the cell cycle. Acts as a corepressor of several transcription factors, including SMAD1 and POU4F1/Brn3a and probably NK homeodomain transcription factors. Phosphorylates PDX1, ATF1, PML, p53/TP53, CREB1, CTBP1, CBX4, RUNX1, EP300, CTNNB1, HMGA1, ZBTB4 and DAZAP2. Inhibits cell growth and promotes apoptosis through the activation of p53/TP53 both at the transcription level and at the protein level (by phosphorylation and indirect acetylation). The phosphorylation of p53/TP53 may be mediated by a p53/TP53-HIPK2-AXIN1 complex. Involved in the response to hypoxia by acting as a transcriptional co-suppressor of HIF1A. Mediates transcriptional activation of TP73. In response to TGFB, cooperates with DAXX to activate JNK. Negative regulator through phosphorylation and subsequent proteasomal degradation of CTNNB1 and the antiapoptotic factor CTBP1. In the Wnt/beta-catenin signaling pathway acts as an intermediate kinase between MAP3K7/TAK1 and NLK to promote the proteasomal degradation of MYB. Phosphorylates CBX4 upon DNA damage and promotes its E3 SUMO-protein ligase activity. Activates CREB1 and ATF1 transcription factors by phosphorylation in response to genotoxic stress. In response to DNA damage, stabilizes PML by phosphorylation. PML, HIPK2 and FBXO3 may act synergically to activate p53/TP53-dependent transactivation. Promotes angiogenesis, and is involved in erythroid differentiation, especially during fetal liver erythropoiesis. Phosphorylation of RUNX1 and EP300 stimulates EP300 transcription regulation activity. Triggers ZBTB4 protein degradation in response to DNA damage. In response to DNA damage, phosphorylates DAZAP2 which localizes DAZAP2 to the nucleus, reduces interaction of DAZAP2 with HIPK2 and prevents DAZAP2-dependent ubiquitination of HIPK2 by E3 ubiquitin-protein ligase SIAH1 and subsequent proteasomal degradation. Modulates HMGA1 DNA-binding affinity. In response to high glucose, triggers phosphorylation-mediated subnuclear localization shifting of PDX1. Involved in the regulation of eye size, lens formation and retinal lamination during late embryogenesis. This chain is Homeodomain-interacting protein kinase 2 (Hipk2), found in Mesocricetus auratus (Golden hamster).